Consider the following 180-residue polypeptide: UPF0340 protein YwlG (180 aa).

This sequence belongs to the UPF0340 family.

This Bacillus subtilis (strain 168) protein is UPF0340 protein YwlG (ywlG).